The following is a 557-amino-acid chain: Dihydroxy-acid dehydratase (557 aa).

Position 78 (D78) interacts with Mg(2+). Position 119 (C119) interacts with [2Fe-2S] cluster. 2 residues coordinate Mg(2+): D120 and K121. K121 carries the post-translational modification N6-carboxylysine. Residue C192 coordinates [2Fe-2S] cluster. E442 contributes to the Mg(2+) binding site. The active-site Proton acceptor is the S468.

The protein belongs to the IlvD/Edd family. In terms of assembly, homodimer. Requires [2Fe-2S] cluster as cofactor. Mg(2+) is required as a cofactor.

It catalyses the reaction (2R)-2,3-dihydroxy-3-methylbutanoate = 3-methyl-2-oxobutanoate + H2O. The enzyme catalyses (2R,3R)-2,3-dihydroxy-3-methylpentanoate = (S)-3-methyl-2-oxopentanoate + H2O. It functions in the pathway amino-acid biosynthesis; L-isoleucine biosynthesis; L-isoleucine from 2-oxobutanoate: step 3/4. Its pathway is amino-acid biosynthesis; L-valine biosynthesis; L-valine from pyruvate: step 3/4. Functions in the biosynthesis of branched-chain amino acids. Catalyzes the dehydration of (2R,3R)-2,3-dihydroxy-3-methylpentanoate (2,3-dihydroxy-3-methylvalerate) into 2-oxo-3-methylpentanoate (2-oxo-3-methylvalerate) and of (2R)-2,3-dihydroxy-3-methylbutanoate (2,3-dihydroxyisovalerate) into 2-oxo-3-methylbutanoate (2-oxoisovalerate), the penultimate precursor to L-isoleucine and L-valine, respectively. This Bacillus mycoides (strain KBAB4) (Bacillus weihenstephanensis) protein is Dihydroxy-acid dehydratase.